Consider the following 133-residue polypeptide: Probable nuclear transport factor 2 (133 aa).

Residues V10–L128 enclose the NTF2 domain.

Its subcellular location is the cytoplasm. Functionally, facilitates protein transport into the nucleus. Could be part of a multicomponent system of cytosolic factors that assemble at the pore complex during nuclear import. In Caenorhabditis elegans, this protein is Probable nuclear transport factor 2 (ran-4).